The chain runs to 460 residues: Mitochondrial distribution and morphology protein 10 (460 aa).

It belongs to the MDM10 family. Component of the ER-mitochondria encounter structure (ERMES) or MDM complex, composed of MMM1, MDM10, MDM12 and MDM34. Associates with the mitochondrial outer membrane sorting assembly machinery SAM(core) complex.

The protein resides in the mitochondrion outer membrane. Functionally, component of the ERMES/MDM complex, which serves as a molecular tether to connect the endoplasmic reticulum and mitochondria. Components of this complex are involved in the control of mitochondrial shape and protein biogenesis and may function in phospholipid exchange. MDM10 is involved in the late assembly steps of the general translocase of the mitochondrial outer membrane (TOM complex). Functions in the TOM40-specific route of the assembly of outer membrane beta-barrel proteins, including the association of TOM40 with the receptor TOM22 and small TOM proteins. Can associate with the SAM(core) complex as well as the MDM12-MMM1 complex, both involved in late steps of the major beta-barrel assembly pathway, that is responsible for biogenesis of all outer membrane beta-barrel proteins. May act as a switch that shuttles between both complexes and channels precursor proteins into the TOM40-specific pathway. Plays a role in mitochondrial morphology and in the inheritance of mitochondria. In Candida glabrata (strain ATCC 2001 / BCRC 20586 / JCM 3761 / NBRC 0622 / NRRL Y-65 / CBS 138) (Yeast), this protein is Mitochondrial distribution and morphology protein 10.